A 223-amino-acid chain; its full sequence is Ion-translocating oxidoreductase complex subunit E (223 aa).

A run of 6 helical transmembrane segments spans residues 17–37 (NGVLCMLLGMCPTMAMTGTAT), 40–60 (LGMGLATAAVMAASNLMVAMF), 70–90 (IPVYILIVAANVTFVDLGMNA), 94–114 (ELYKVLGLFIPLIVSNCLPLA), 129–149 (FLDGLFMGLGFTLALTAIGAV), and 182–202 (WGILVLILPPGGFLIAGLMVV).

Belongs to the NqrDE/RnfAE family. In terms of assembly, the complex is composed of six subunits: RnfA, RnfB, RnfC, RnfD, RnfE and RnfG.

The protein resides in the cell inner membrane. In terms of biological role, part of a membrane-bound complex that couples electron transfer with translocation of ions across the membrane. The chain is Ion-translocating oxidoreductase complex subunit E from Paramagnetospirillum magneticum (strain ATCC 700264 / AMB-1) (Magnetospirillum magneticum).